Here is a 407-residue protein sequence, read N- to C-terminus: Arginine deiminase (407 aa).

Cys-397 acts as the Amidino-cysteine intermediate in catalysis.

Belongs to the arginine deiminase family.

The protein resides in the cytoplasm. It carries out the reaction L-arginine + H2O = L-citrulline + NH4(+). It functions in the pathway amino-acid degradation; L-arginine degradation via ADI pathway; carbamoyl phosphate from L-arginine: step 1/2. This chain is Arginine deiminase, found in Salmonella choleraesuis (strain SC-B67).